We begin with the raw amino-acid sequence, 54 residues long: Ovomucoid (54 aa).

The Kazal-like domain maps to 4-54; the sequence is VDCSDYPKPVCSLDYMPLCGSDNTTYNNKCIFCNAVVDSNGTITLSHFGKC. 3 cysteine pairs are disulfide-bonded: Cys6-Cys36, Cys14-Cys33, and Cys22-Cys54. An N-linked (GlcNAc...) asparagine glycan is attached at Asn43.

The protein resides in the secreted. The sequence is that of Ovomucoid from Haemorhous mexicanus (House finch).